The chain runs to 440 residues: L-seryl-tRNA(Sec) selenium transferase (440 aa).

An N6-(pyridoxal phosphate)lysine modification is found at K282.

The protein belongs to the SelA family. It depends on pyridoxal 5'-phosphate as a cofactor.

It localises to the cytoplasm. It catalyses the reaction L-seryl-tRNA(Sec) + selenophosphate + H(+) = L-selenocysteinyl-tRNA(Sec) + phosphate. Its pathway is aminoacyl-tRNA biosynthesis; selenocysteinyl-tRNA(Sec) biosynthesis; selenocysteinyl-tRNA(Sec) from L-seryl-tRNA(Sec) (bacterial route): step 1/1. Functionally, converts seryl-tRNA(Sec) to selenocysteinyl-tRNA(Sec) required for selenoprotein biosynthesis. The chain is L-seryl-tRNA(Sec) selenium transferase from Campylobacter jejuni subsp. doylei (strain ATCC BAA-1458 / RM4099 / 269.97).